The following is a 251-amino-acid chain: MWDQKWVIGNWKMNGRLQNNNSLMHRFRILPTAERVLIGLAAPTVYLLQLHNAMQIVLNNRILTCAQDVSRFPDNGAYTGEVSAEMLADTGTDIVLIGHSERSLYFGEKNEIQRRKMENVLNVGLIPLLCVGESLEEREAGKEHEVIAHQLSILQGLDTKNIAVAYEPVWAIGTGKVATVEQIADMHAFIYKEILSLCGSDVKIRVLYGGSVKADNAADIFAVPYVDGALVGGASLSYDSFTAIISAAQNA.

10-12 provides a ligand contact to substrate; that stretch reads NWK. His-99 (electrophile) is an active-site residue. The active-site Proton acceptor is the Glu-167. Residues Gly-173, Ser-211, and 232–233 contribute to the substrate site; that span reads GG.

The protein belongs to the triosephosphate isomerase family. As to quaternary structure, homodimer.

The protein resides in the cytoplasm. It catalyses the reaction D-glyceraldehyde 3-phosphate = dihydroxyacetone phosphate. The protein operates within carbohydrate biosynthesis; gluconeogenesis. It participates in carbohydrate degradation; glycolysis; D-glyceraldehyde 3-phosphate from glycerone phosphate: step 1/1. Its function is as follows. Involved in the gluconeogenesis. Catalyzes stereospecifically the conversion of dihydroxyacetone phosphate (DHAP) to D-glyceraldehyde-3-phosphate (G3P). This is Triosephosphate isomerase from Neisseria meningitidis serogroup A / serotype 4A (strain DSM 15465 / Z2491).